Consider the following 272-residue polypeptide: Undecaprenyl-diphosphatase (272 aa).

The next 8 helical transmembrane spans lie at 5-25 (YSLF…FLPV), 45-65 (AKTF…VVFW), 88-108 (HLTL…GLAF), 115-135 (LFNP…LLAA), 152-171 (TYRQ…WPGF), 189-209 (YAAS…ASGL), 221-241 (GDLP…LIAI), and 251-271 (ISFV…YWVF).

It belongs to the UppP family.

The protein resides in the cell inner membrane. It catalyses the reaction di-trans,octa-cis-undecaprenyl diphosphate + H2O = di-trans,octa-cis-undecaprenyl phosphate + phosphate + H(+). Its function is as follows. Catalyzes the dephosphorylation of undecaprenyl diphosphate (UPP). Confers resistance to bacitracin. This Yersinia enterocolitica serotype O:8 / biotype 1B (strain NCTC 13174 / 8081) protein is Undecaprenyl-diphosphatase.